Here is a 196-residue protein sequence, read N- to C-terminus: HTH-type transcriptional regulator BetI (196 aa).

The 61-residue stretch at 8 to 68 folds into the HTH tetR-type domain; the sequence is PVRREQLIRA…AAMRQILREL (61 aa). A DNA-binding region (H-T-H motif) is located at residues 31–50; it reads TVATIAKKAGLSSGIVAHYF.

It functions in the pathway amine and polyamine biosynthesis; betaine biosynthesis via choline pathway [regulation]. Functionally, repressor involved in the biosynthesis of the osmoprotectant glycine betaine. It represses transcription of the choline transporter BetT and the genes of BetAB involved in the synthesis of glycine betaine. This is HTH-type transcriptional regulator BetI from Stenotrophomonas maltophilia (strain R551-3).